The chain runs to 129 residues: Glycine cleavage system H protein (129 aa).

The region spanning Ser-24–Met-106 is the Lipoyl-binding domain. Lys-65 bears the N6-lipoyllysine mark.

Belongs to the GcvH family. In terms of assembly, the glycine cleavage system is composed of four proteins: P, T, L and H. The cofactor is (R)-lipoate.

Its function is as follows. The glycine cleavage system catalyzes the degradation of glycine. The H protein shuttles the methylamine group of glycine from the P protein to the T protein. The sequence is that of Glycine cleavage system H protein from Shewanella halifaxensis (strain HAW-EB4).